Here is a 307-residue protein sequence, read N- to C-terminus: Nucleotide-binding protein Acid345_3782 (307 aa).

31-38 provides a ligand contact to ATP; that stretch reads GLSGSGKA. 81–84 provides a ligand contact to GTP; it reads DIRE.

The protein belongs to the RapZ-like family.

Its function is as follows. Displays ATPase and GTPase activities. The chain is Nucleotide-binding protein Acid345_3782 from Koribacter versatilis (strain Ellin345).